Here is a 508-residue protein sequence, read N- to C-terminus: Lysine--tRNA ligase (508 aa).

Positions 418 and 425 each coordinate Mg(2+).

The protein belongs to the class-II aminoacyl-tRNA synthetase family. As to quaternary structure, homodimer. Requires Mg(2+) as cofactor.

The protein localises to the cytoplasm. The enzyme catalyses tRNA(Lys) + L-lysine + ATP = L-lysyl-tRNA(Lys) + AMP + diphosphate. This chain is Lysine--tRNA ligase, found in Burkholderia vietnamiensis (strain G4 / LMG 22486) (Burkholderia cepacia (strain R1808)).